Reading from the N-terminus, the 479-residue chain is Transcript termination protein A18 (479 aa).

A Helicase ATP-binding domain is found at 99-255 (KNKHKRPTYI…NDIINVSNSL (157 aa)). Residue 112–119 (LACGFGKT) coordinates ATP. Residues 205-208 (DESH) carry the DESH box motif. The region spanning 308-469 (ILDTIIYDFN…EKKGKKKELA (162 aa)) is the Helicase C-terminal domain.

The protein belongs to the helicase family. Poxviruses subfamily. Interacts with G2. Might be part of a transcription complex composed at least of G2, A18, and H5.

The protein resides in the virion. Functionally, DNA helicase which seems to act as a postreplicative transcription termination factor. Involved in ATP-dependent release of nascent RNA. Forms a stable complex with single-stranded DNA, and to a lesser extent RNA. The protein is Transcript termination protein A18 of Homo sapiens (Human).